The following is a 249-amino-acid chain: 5'-nucleotidase SurE (249 aa).

The a divalent metal cation site is built by Asp-8, Asp-9, Ser-39, and Asn-91.

It belongs to the SurE nucleotidase family. A divalent metal cation is required as a cofactor.

The protein resides in the cytoplasm. It carries out the reaction a ribonucleoside 5'-phosphate + H2O = a ribonucleoside + phosphate. Nucleotidase that shows phosphatase activity on nucleoside 5'-monophosphates. This is 5'-nucleotidase SurE from Pseudomonas paraeruginosa (strain DSM 24068 / PA7) (Pseudomonas aeruginosa (strain PA7)).